The following is a 176-amino-acid chain: Membrane-anchored junction protein (176 aa).

Topologically, residues 1–151 (MSLKPFTYPF…QHNSPPPKER (151 aa)) are nuclear. Residues 59–150 (AVMRKRKHMD…LQHNSPPPKE (92 aa)) form a disordered region. The span at 95–107 (PPVETRRNRERKT) shows a compositional bias: basic and acidic residues. The segment covering 108–120 (QQGLQETLASDIT) has biased composition (polar residues). The helical transmembrane segment at 152-170 (AATGFFGFLSSLFPFRYFF) threads the bilayer. At 171 to 176 (RKSSHS) the chain is on the perinuclear space side.

It belongs to the MAJIN family. In terms of assembly, component of the MAJIN-TERB1-TERB2 complex, composed of MAJIN, TERB1 and TERB2.

The protein localises to the nucleus inner membrane. It is found in the chromosome. The protein resides in the telomere. Functionally, meiosis-specific telomere-associated protein involved in meiotic telomere attachment to the nucleus inner membrane, a crucial step for homologous pairing and synapsis. Component of the MAJIN-TERB1-TERB2 complex, which promotes telomere cap exchange by mediating attachment of telomeric DNA to the inner nuclear membrane and replacement of the protective cap of telomeric chromosomes: in early meiosis, the MAJIN-TERB1-TERB2 complex associates with telomeric DNA and the shelterin/telosome complex. During prophase, the complex matures and promotes release of the shelterin/telosome complex from telomeric DNA. In the complex, MAJIN acts as the anchoring subunit to the nucleus inner membrane. MAJIN shows DNA-binding activity, possibly for the stabilization of telomere attachment on the nucleus inner membrane. The protein is Membrane-anchored junction protein of Homo sapiens (Human).